The following is a 236-amino-acid chain: Histone H1 (236 aa).

Residues 1 to 10 show a composition bias toward basic and acidic residues; sequence MPPKKTETKA. Disordered regions lie at residues 1–36 and 94–236; these read MPPK…SPST and KGVF…AEKA. Positions 11–36 are enriched in low complexity; sequence ADASAAAAPAPAAAPTSAPKTKSPST. The H15 domain occupies 36-111; sequence THASYLDMIT…GPSGGTKLAK (76 aa). Basic residues predominate over residues 109–122; it reads LAKKVAKPAPKKAA. Over residues 123-150 the composition is skewed to basic and acidic residues; the sequence is PKKETKEKKPAAAKKEGAAKKETKEKKA. Over residues 153–162 the composition is skewed to low complexity; sequence AKKAAAPKKA. Residues 165 to 174 are compositionally biased toward basic and acidic residues; sequence PKKEVKEKKA. Residues 202–220 show a composition bias toward low complexity; that stretch reads AKSTAKPAAAKKAAAPKKA. Positions 224–236 are enriched in basic and acidic residues; that stretch reads KKAEKAEPAAEKA.

The protein belongs to the histone H1/H5 family.

It is found in the nucleus. The protein localises to the chromosome. Its function is as follows. Could act as an H1-type linker histone. This Neurospora crassa (strain ATCC 24698 / 74-OR23-1A / CBS 708.71 / DSM 1257 / FGSC 987) protein is Histone H1 (hH1).